Reading from the N-terminus, the 355-residue chain is MNPIRKIIHIDMDCFYAAIEMRDFPELANKPIAVGGDAKRRGVIATCNYAARQFGIRSAMPTAHALKLCRELILRPVRMDVYQKESQYIRSLLTEYTDLVEPLSLDEAYLDVTESTQCQGSATWIAEEIRARIYQTRQLTASAGIAPNKSLAKIASDWHKPNGQMVIRPEDVSAFVLDLPVRKLFGVGPKMEEKLGALNIKTCADLQRYSVEYLLQKFGTMGQRLYELARGIDNRPVNPERIRKSISVEETYPKDLPNSEACLAVLPDLMARLEARIQRAGKISGIHNLFVKLKFNDFQQTTIERVMDKLDLIVLRQLIQEGFARRGMPVRLLGIGIKLKQENTYQSIQLPLLDL.

The UmuC domain maps to 7–188; the sequence is IIHIDMDCFY…LPVRKLFGVG (182 aa). Residues Asp-11 and Asp-106 each coordinate Mg(2+). The active site involves Glu-107.

The protein belongs to the DNA polymerase type-Y family. As to quaternary structure, monomer. Mg(2+) serves as cofactor.

It localises to the cytoplasm. It catalyses the reaction DNA(n) + a 2'-deoxyribonucleoside 5'-triphosphate = DNA(n+1) + diphosphate. In terms of biological role, poorly processive, error-prone DNA polymerase involved in untargeted mutagenesis. Copies undamaged DNA at stalled replication forks, which arise in vivo from mismatched or misaligned primer ends. These misaligned primers can be extended by PolIV. Exhibits no 3'-5' exonuclease (proofreading) activity. May be involved in translesional synthesis, in conjunction with the beta clamp from PolIII. This chain is DNA polymerase IV, found in Legionella pneumophila (strain Paris).